We begin with the raw amino-acid sequence, 219 residues long: uncharacterized protein (219 aa).

The first 15 residues, 1–15 (MYVLFLLSWVLVAGA), serve as a signal peptide directing secretion. A glycan (N-linked (GlcNAc...) asparagine) is linked at N118. Residues 138 to 174 (GEVGEDPGKRARKRRLGLPIGEPGEDVGKRMRQRQQG) are disordered.

As to expression, component of the acid-insoluble and acid-soluble organic matrix of calcified layers of the shell (at protein level).

It is found in the secreted. This is an uncharacterized protein from Lottia gigantea (Giant owl limpet).